The chain runs to 262 residues: Small ribosomal subunit protein uS2 (262 aa).

Positions 224–262 (GKQGQDDAQQETADDNAANETVSEDSLKNLKNSVEGKED) are disordered.

Belongs to the universal ribosomal protein uS2 family.

The polypeptide is Small ribosomal subunit protein uS2 (Limosilactobacillus reuteri (strain DSM 20016) (Lactobacillus reuteri)).